The chain runs to 134 residues: Large ribosomal subunit protein eL27 (134 aa).

In terms of domain architecture, KOW spans 5–40; sequence LKSGKVVVVLSGRFAGKKAVIVRNFDDGTSSRPYGH.

This sequence belongs to the eukaryotic ribosomal protein eL27 family.

The polypeptide is Large ribosomal subunit protein eL27 (RPL27) (Pyrobotrys stellatus (Green alga)).